The chain runs to 371 residues: Cytochrome b (371 aa).

The next 4 helical transmembrane spans lie at 25–45 (FGSM…FLAV), 69–90 (WLMQ…YTHI), 105–125 (WLSG…GYVL), and 170–190 (FFAL…LHIM). Residues histidine 75 and histidine 89 each contribute to the heme b site. Residues histidine 174 and histidine 188 each coordinate heme b. Histidine 193 provides a ligand contact to a ubiquinone. 4 consecutive transmembrane segments (helical) span residues 218–238 (YKDM…VAFF), 280–300 (LGGA…PFTH), 312–332 (IMQF…WAAT), and 339–358 (FTAI…ITNP).

It belongs to the cytochrome b family. As to quaternary structure, the cytochrome bc1 complex contains 3 respiratory subunits (MT-CYB, CYC1 and UQCRFS1), 2 core proteins (UQCRC1 and UQCRC2) and probably 6 low-molecular weight proteins. Heme b is required as a cofactor.

It is found in the mitochondrion inner membrane. In terms of biological role, component of the ubiquinol-cytochrome c reductase complex (complex III or cytochrome b-c1 complex) that is part of the mitochondrial respiratory chain. The b-c1 complex mediates electron transfer from ubiquinol to cytochrome c. Contributes to the generation of a proton gradient across the mitochondrial membrane that is then used for ATP synthesis. This is Cytochrome b (MT-CYB) from Eryx colubrinus loveridgei.